Reading from the N-terminus, the 267-residue chain is 3-methyl-2-oxobutanoate hydroxymethyltransferase (267 aa).

2 residues coordinate Mg(2+): Asp46 and Asp85. Residues 46 to 47, Asp85, and Lys115 contribute to the 3-methyl-2-oxobutanoate site; that span reads DS. Mg(2+) is bound at residue Glu117. Catalysis depends on Glu184, which acts as the Proton acceptor.

This sequence belongs to the PanB family. In terms of assembly, homodecamer; pentamer of dimers. It depends on Mg(2+) as a cofactor.

Its subcellular location is the cytoplasm. It catalyses the reaction 3-methyl-2-oxobutanoate + (6R)-5,10-methylene-5,6,7,8-tetrahydrofolate + H2O = 2-dehydropantoate + (6S)-5,6,7,8-tetrahydrofolate. It participates in cofactor biosynthesis; (R)-pantothenate biosynthesis; (R)-pantoate from 3-methyl-2-oxobutanoate: step 1/2. Functionally, catalyzes the reversible reaction in which hydroxymethyl group from 5,10-methylenetetrahydrofolate is transferred onto alpha-ketoisovalerate to form ketopantoate. In Geobacter metallireducens (strain ATCC 53774 / DSM 7210 / GS-15), this protein is 3-methyl-2-oxobutanoate hydroxymethyltransferase.